A 542-amino-acid chain; its full sequence is CTP synthase (542 aa).

The tract at residues methionine 1 to leucine 265 is amidoligase domain. Serine 13 is a binding site for CTP. Serine 13 provides a ligand contact to UTP. Residues serine 14–isoleucine 19 and aspartate 71 contribute to the ATP site. The Mg(2+) site is built by aspartate 71 and glutamate 139. CTP contacts are provided by residues aspartate 146–glutamate 148, lysine 186–glutamine 191, and lysine 222. UTP is bound by residues lysine 186–glutamine 191 and lysine 222. A Glutamine amidotransferase type-1 domain is found at valine 290 to glutamate 541. Glycine 352 lines the L-glutamine pocket. Cysteine 379 functions as the Nucleophile; for glutamine hydrolysis in the catalytic mechanism. L-glutamine is bound by residues leucine 380–glutamine 383, glutamate 403, and arginine 471. Active-site residues include histidine 514 and glutamate 516.

Belongs to the CTP synthase family. Homotetramer.

The enzyme catalyses UTP + L-glutamine + ATP + H2O = CTP + L-glutamate + ADP + phosphate + 2 H(+). The catalysed reaction is L-glutamine + H2O = L-glutamate + NH4(+). It carries out the reaction UTP + NH4(+) + ATP = CTP + ADP + phosphate + 2 H(+). The protein operates within pyrimidine metabolism; CTP biosynthesis via de novo pathway; CTP from UDP: step 2/2. With respect to regulation, allosterically activated by GTP, when glutamine is the substrate; GTP has no effect on the reaction when ammonia is the substrate. The allosteric effector GTP functions by stabilizing the protein conformation that binds the tetrahedral intermediate(s) formed during glutamine hydrolysis. Inhibited by the product CTP, via allosteric rather than competitive inhibition. In terms of biological role, catalyzes the ATP-dependent amination of UTP to CTP with either L-glutamine or ammonia as the source of nitrogen. Regulates intracellular CTP levels through interactions with the four ribonucleotide triphosphates. The protein is CTP synthase of Sulfurimonas denitrificans (strain ATCC 33889 / DSM 1251) (Thiomicrospira denitrificans (strain ATCC 33889 / DSM 1251)).